The chain runs to 37 residues: MVEPLLSGIVLGMITVSAFGLFVAAFLQYRRGNQFEI.

A helical membrane pass occupies residues 5 to 25; that stretch reads LLSGIVLGMITVSAFGLFVAA.

Belongs to the PetG family. In terms of assembly, the 4 large subunits of the cytochrome b6-f complex are cytochrome b6, subunit IV (17 kDa polypeptide, PetD), cytochrome f and the Rieske protein, while the 4 small subunits are PetG, PetL, PetM and PetN. The complex functions as a dimer.

It localises to the plastid. The protein localises to the chloroplast thylakoid membrane. Functionally, component of the cytochrome b6-f complex, which mediates electron transfer between photosystem II (PSII) and photosystem I (PSI), cyclic electron flow around PSI, and state transitions. PetG is required for either the stability or assembly of the cytochrome b6-f complex. This chain is Cytochrome b6-f complex subunit 5, found in Thalassiosira pseudonana (Marine diatom).